Consider the following 197-residue polypeptide: RNA-binding protein with multiple splicing (197 aa).

M1 is modified (N-acetylmethionine). At T12 the chain carries Phosphothreonine. In terms of domain architecture, RRM spans R24–A101. The tract at residues F98–M105 is interaction with RNA. Residue T113 is modified to Phosphothreonine.

As to quaternary structure, homodimer; each protein chain binds one RNA molecule via the external surface of the homodimer. Interacts with RNA binding proteins MBNL1, RBFOX2, RBM4 and RBM14; the interaction allows cooperative assembly of stable cell-specific alternative splicing regulatory complexes. Also interacts with RBM47, MATR3 and ESRP2. Interacts with SMAD2, SMAD3 and SMAD4; the interactions are direct. In terms of tissue distribution, mRNA expressed in developing heart, with significantly higher expression in the atria relative to the ventricles.

Its subcellular location is the nucleus. It localises to the cytoplasm. The protein localises to the stress granule. The protein resides in the P-body. RNA binding protein that mediates the regulation of pre-mRNA alternative splicing (AS). Acts either as activator (FLNB, HSPG2, LIPA1, MYOCD, PTPRF and PPFIBP1) or repressor (TPM1, ACTN1, ITGA7, PIEZO1, LSM14B, MBNL1 and MBML2) of splicing events on specific pre-mRNA targets. Together with RNA binding proteins RBFOX2 and MBNL1/2, activates a splicing program associated with differentiated contractile vascular smooth muscle cells (SMC) by regulating AS of numerous pre-mRNA involved in actin cytoskeleton and focal adhesion machineries, suggesting a role in promoting a cell differentiated state. Binds to introns, exons and 3'-UTR associated with tandem CAC trinucleotide motifs separated by a variable spacer region, at a minimum as a dimer. The minimal length of RNA required for RBPMS-binding tandem CAC motifs is 15 nt, with spacing ranging from 1 to 9 nt. Can also bind to CA dinucleotide repeats. Mediates repression of TPM1 exon 3 by binding to CAC tandem repeats in the flanking intronic regions, followed by higher-order oligomerization and heterotypic interactions with other splicing regulators including MBNL1 and RBFOX2, which prevents assembly of ATP-dependent splicing complexes. In Mus musculus (Mouse), this protein is RNA-binding protein with multiple splicing.